The primary structure comprises 117 residues: UPF0122 protein Cthe_0771 (117 aa).

This sequence belongs to the UPF0122 family.

Might take part in the signal recognition particle (SRP) pathway. This is inferred from the conservation of its genetic proximity to ftsY/ffh. May be a regulatory protein. This chain is UPF0122 protein Cthe_0771, found in Acetivibrio thermocellus (strain ATCC 27405 / DSM 1237 / JCM 9322 / NBRC 103400 / NCIMB 10682 / NRRL B-4536 / VPI 7372) (Clostridium thermocellum).